The following is a 641-amino-acid chain: MPILEKTPPKMAAKSPSSEEEPGLPKLPVPPLQQTLATYLRCMQHLVPEEQFRRSQAIVQQFGAPGGLGETLQQKLLERQEQTANWVSEYWLNDMYLNNRLALPVNSSPAVIFARQHFQDTNDQLRFAANLISGVLSYKALLDSHSIPIDCAKGQLSGQPLCMKQYYGLFSSYRLPGHTQDTLVAQKSSVMPEPEHVIVACCNQFFVLDVVINFRRLSEGDLFTQLRKIVRMASNEDERLPPIGLLTSDGRSEWAEARTVLVKDSTNRDSLDMIERCICLVCLDAPGGMELSDTNRALQLLHGGGCSKNGANRWYDKSLQFVVGRDGTCGVVCEHSPFDGIVLVQCTEHLLKHMVKSSKKMVRADSVSELPAPRRLRWKCSPEIQGLLASSAEKLQQIVKNLDFTVYKFDDYGKTFIKQQKCSPDAFIQVALQLAFYRLHGRLVPTYESASIRRFHEGRVDNIRSATPEALHFVKAITDHASAMPDSEKLLLLKDAIRAQTQYTVMAITGMAIDNHLLGLRELAREVCKELPEMFTDETYLMSNRFVLSTSQVPTTMEMFCCYGPVVPNGYGACYNPQPESILFCISSFHGCKETSSTKFAKAVEESFIEMKGLCSLSQSGMGKPLATKEKVTRPSQVHQP.

Residues 1–29 are disordered; sequence MPILEKTPPKMAAKSPSSEEEPGLPKLPV. A Phosphoserine modification is found at S17. The Proton acceptor role is filled by H335. S366 carries the post-translational modification Phosphoserine. CoA-binding positions include 413-425, S451, and Q552; that span reads GKTFIKQQKCSPD. Residues 619–641 are disordered; the sequence is QSGMGKPLATKEKVTRPSQVHQP.

This sequence belongs to the carnitine/choline acetyltransferase family.

The enzyme catalyses choline + acetyl-CoA = acetylcholine + CoA. Catalyzes the reversible synthesis of acetylcholine (ACh) from acetyl CoA and choline at cholinergic synapses. This chain is Choline O-acetyltransferase (CHAT), found in Sus scrofa (Pig).